The primary structure comprises 878 residues: MAPAPAPAGSADQFRGQARLPRFAAPRRYELRLRPDLDACVFTGDASVVVDVSAPTRFLVLNAADLAVDRASIRFQGLAPTEVSLFEDDEILVLEFDGELPLGEGVLAMDFNGTLNDQMRGFYRSKYEYKGETKNMAVTQFEAVDARRCFPCWDEPAFKAKFKLTLEVPSELVALSNMPVACETIAGPIKTIHYEESPLMSTYLVAIVVGLFDYVEGVTSEGNKVRVYTQVGKSSQGKFALDIGVKSLNFYKDYFDTPYPLPKLDMVAIPDFAAGAMENYGLVTYREVSLLFDEQSSSASFKQNVAITVAHELAHQWFGNLVTMEWWTHLWLNEGFATWMSHLSVDSFFPQWNIWTQFLDSTTSALKLDSQAESHPIEVEIHHASEVDEIFDAISYDKGASVIRMLQSYLGAERFQKALTSYIKKYAYSNAKTEDLWAVLEEVSGEPVKDLMTTWTKQQGYPVISVKLKGHDLELEQDQFLLNGTSGAGIWIVPITLGCCSHDKQKRLLLKHKHDNIKAIVSQCDSRQKGGNFWIKLNIDETGFYRVKYDDELTAALRNALQAKKLSLMDEIGIVDDAHALSIACKQTLSSLLHLLYAFRDEADYSVLSHINSVTSSVAKISIDATPDLAGDIKQLFIKLLLPPAKKLGWDPKDGESHLNAMLRPMLLVALVQLGHDKTINEGFRRFQIFFDDRNTSLLTPDTRKAAYLSVMHNVSSTNRSGYDALLKVYRKSAEGEEKLRVLGTLSSCQDKDIVLESLNLIFTDEVRNQDAYRVLGGVIIEARETAWSWLKENWDRISEAFSGSSLISDFIRSIVTLFTSKEKEAEISQFFATRTKPGYERTLKQSLERVLINARWIEGIRGEAKLAQTVHELLHKP.

Residues 102–209 are required for membrane association; that stretch reads LGEGVLAMDF…MSTYLVAIVV (108 aa). Residues E142 and 275-279 each bind substrate; that span reads GAMEN. Zn(2+) is bound at residue H311. Catalysis depends on E312, which acts as the Proton acceptor. Residues H315 and E334 each coordinate Zn(2+). The Dileucine internalization motif motif lies at 726–727; it reads LL.

It belongs to the peptidase M1 family. Homodimer. The cofactor is Zn(2+).

The protein resides in the membrane. The protein localises to the microsome membrane. Its subcellular location is the cytoplasm. It carries out the reaction Release of an N-terminal amino acid, Xaa-|-Yaa- from a peptide, amide or arylamide. Xaa is preferably Ala, but may be most amino acids including Pro (slow action). When a terminal hydrophobic residue is followed by a prolyl residue, the two may be released as an intact Xaa-Pro dipeptide.. This is Aminopeptidase M1-C from Oryza sativa subsp. japonica (Rice).